A 36-amino-acid polypeptide reads, in one-letter code: Pancreatic polypeptide (36 aa).

Tyr36 is modified (tyrosine amide).

It belongs to the NPY family.

Its subcellular location is the secreted. Its function is as follows. Hormone secreted by pancreatic cells that acts as a regulator of pancreatic and gastrointestinal functions probably by signaling through the G protein-coupled receptor NPY4R2. The sequence is that of Pancreatic polypeptide (PPY) from Ceratotherium simum (White rhinoceros).